Consider the following 316-residue polypeptide: Acetaldehyde dehydrogenase (316 aa).

11–14 (SGNI) contributes to the NAD(+) binding site. Residue Cys131 is the Acyl-thioester intermediate of the active site. NAD(+) is bound by residues 162–170 (SAGPGTRAN) and Asn289.

The protein belongs to the acetaldehyde dehydrogenase family. Interacts with MhpE.

It carries out the reaction acetaldehyde + NAD(+) + CoA = acetyl-CoA + NADH + H(+). Its pathway is aromatic compound metabolism; 3-phenylpropanoate degradation. Catalyzes the conversion of acetaldehyde to acetyl-CoA, using NAD(+) and coenzyme A. Is the final enzyme in the meta-cleavage pathway for the degradation of aromatic compounds. The chain is Acetaldehyde dehydrogenase from Escherichia coli O7:K1 (strain IAI39 / ExPEC).